The primary structure comprises 48 residues: Acidic phospholipase A2 (48 aa).

3 residues coordinate Ca(2+): Y27, G29, and G31. Residues C28 and C44 are joined by a disulfide bond. The active site involves H47. Residue D48 coordinates Ca(2+).

Belongs to the phospholipase A2 family. Group II subfamily. D49 sub-subfamily. As to quaternary structure, monomer. Requires Ca(2+) as cofactor. As to expression, expressed by the venom gland.

It is found in the secreted. The catalysed reaction is a 1,2-diacyl-sn-glycero-3-phosphocholine + H2O = a 1-acyl-sn-glycero-3-phosphocholine + a fatty acid + H(+). Inhibited by EDTA. Inhibited by Ba(2+), Cu(+), Fe(2+) and Zn(2+) ions and, to a lesser extent, by Mn(2+) and Mg(2+) ions. Its function is as follows. Snake venom phospholipase A2 (PLA2) that shows myotoxicity and induces paw edema in mice. Exhibits indirect hemolytic activity. Inhibits platelet aggregation induced by ADP and collagen. PLA2 catalyzes the calcium-dependent hydrolysis of the 2-acyl groups in 3-sn-phosphoglycerides. The chain is Acidic phospholipase A2 from Bothrops pauloensis (Neuwied's lancehead).